The following is a 195-amino-acid chain: Probable peroxygenase 4 (195 aa).

Residues 14 to 49 (EEDNFLQRHVAFFDRNKDGIVYPSETFQGFRAIGCG) form the EF-hand domain. His-22 lines the heme pocket. Residues Asp-27, Asn-29, Asp-31, and Glu-38 each contribute to the Ca(2+) site. Residues 70 to 79 (PGKGFSIWFP) carry the Proline-knot motif. Ser-177 is subject to Phosphoserine.

The protein belongs to the caleosin family. As to quaternary structure, homodimer. It depends on heme b as a cofactor. The cofactor is Ca(2+). In terms of tissue distribution, expressed in roots, leaves, stems, shoots, flowers and germinated seeds. Barely detected in dry seeds prior to germination. Preferentially expressed in vascular bundles and in guard cells.

The protein localises to the lipid droplet. The enzyme catalyses RH + ROOH = ROH + ROH.. Functionally, calcium-binding peroxygenase involved in the degradation of storage lipid in oil bodies. May be involved in the interaction between oil bodies and vacuoles during seed germination. Acts as a negative regulator of abscisic acid responses in non-seed tissues. This chain is Probable peroxygenase 4 (PXG4), found in Arabidopsis thaliana (Mouse-ear cress).